Reading from the N-terminus, the 1374-residue chain is DNA-directed RNA polymerase subunit beta (1374 aa).

This sequence belongs to the RNA polymerase beta chain family. The RNAP catalytic core consists of 2 alpha, 1 beta, 1 beta' and 1 omega subunit. When a sigma factor is associated with the core the holoenzyme is formed, which can initiate transcription.

The catalysed reaction is RNA(n) + a ribonucleoside 5'-triphosphate = RNA(n+1) + diphosphate. Functionally, DNA-dependent RNA polymerase catalyzes the transcription of DNA into RNA using the four ribonucleoside triphosphates as substrates. The chain is DNA-directed RNA polymerase subunit beta from Rickettsia typhi (strain ATCC VR-144 / Wilmington).